Here is an 859-residue protein sequence, read N- to C-terminus: Photoactivated adenylate cyclase subunit beta (859 aa).

The BLUF 1 domain maps to 56-149; sequence LRRLMYLSKS…GRMYGDWHMK (94 aa). The Guanylate cyclase 1 domain maps to 205-333; sequence VVTFIYLVEF…DCINTTSRIA (129 aa). Positions 420–443 are disordered; sequence RPPIFDDTPKGNPRPRTPGYGGRQ. One can recognise a BLUF 2 domain in the interval 471–563; that stretch reads LTTLTYISQA…RVYPSEWTLT (93 aa). One can recognise a Guanylate cyclase 2 domain in the interval 619 to 748; it reads VMLATDICSF…AVSARVMEVE (130 aa). A disordered region spans residues 813-859; it reads AARSGEKPLTEPEEAKPDFRVSPGRVRHGDSGRRSNSAQGKRSIQVR. Residues 815–831 show a composition bias toward basic and acidic residues; it reads RSGEKPLTEPEEAKPDF. Positions 846-859 are enriched in polar residues; sequence RSNSAQGKRSIQVR.

It belongs to the adenylyl cyclase class-4/guanylyl cyclase family. In terms of assembly, heterotetramer of two alpha and two beta subunits. It depends on FAD as a cofactor.

The protein resides in the cell projection. It localises to the cilium. It is found in the flagellum. The catalysed reaction is ATP = 3',5'-cyclic AMP + diphosphate. Activity increased by up to 80-fold under blue light. Functionally, acts as a blue light photoreceptor for the step-up photophobic response. Mediates photoavoidance. The chain is Photoactivated adenylate cyclase subunit beta from Euglena gracilis.